The chain runs to 635 residues: 1-deoxy-D-xylulose-5-phosphate synthase (635 aa).

Thiamine diphosphate is bound by residues histidine 79 and 120 to 122 (GHS). Aspartate 151 lines the Mg(2+) pocket. Thiamine diphosphate contacts are provided by residues 152 to 153 (GA), asparagine 182, tyrosine 290, and glutamate 372. Asparagine 182 serves as a coordination point for Mg(2+).

It belongs to the transketolase family. DXPS subfamily. Homodimer. It depends on Mg(2+) as a cofactor. Thiamine diphosphate serves as cofactor.

It carries out the reaction D-glyceraldehyde 3-phosphate + pyruvate + H(+) = 1-deoxy-D-xylulose 5-phosphate + CO2. The protein operates within metabolic intermediate biosynthesis; 1-deoxy-D-xylulose 5-phosphate biosynthesis; 1-deoxy-D-xylulose 5-phosphate from D-glyceraldehyde 3-phosphate and pyruvate: step 1/1. Catalyzes the acyloin condensation reaction between C atoms 2 and 3 of pyruvate and glyceraldehyde 3-phosphate to yield 1-deoxy-D-xylulose-5-phosphate (DXP). The polypeptide is 1-deoxy-D-xylulose-5-phosphate synthase (Stenotrophomonas maltophilia (strain K279a)).